Here is a 120-residue protein sequence, read N- to C-terminus: Large ribosomal subunit protein uL18 (120 aa).

Belongs to the universal ribosomal protein uL18 family. As to quaternary structure, part of the 50S ribosomal subunit; part of the 5S rRNA/L5/L18/L25 subcomplex. Contacts the 5S and 23S rRNAs.

This is one of the proteins that bind and probably mediate the attachment of the 5S RNA into the large ribosomal subunit, where it forms part of the central protuberance. In Gluconobacter oxydans (strain 621H) (Gluconobacter suboxydans), this protein is Large ribosomal subunit protein uL18.